The sequence spans 610 residues: Pyruvate decarboxylase 1 (610 aa).

Positions 72 and 159 each coordinate substrate. The interval 437–519 (DSWFNCQKLR…FLINNGGYTI (83 aa)) is thiamine pyrophosphate binding. Mg(2+) contacts are provided by aspartate 487, asparagine 514, and glycine 516. Glutamate 520 lines the substrate pocket.

This sequence belongs to the TPP enzyme family. In terms of assembly, homotetramer. A metal cation serves as cofactor. It depends on thiamine diphosphate as a cofactor.

It carries out the reaction a 2-oxocarboxylate + H(+) = an aldehyde + CO2. The sequence is that of Pyruvate decarboxylase 1 (PDC1) from Zea mays (Maize).